Here is a 417-residue protein sequence, read N- to C-terminus: Ribonuclease T2-like (417 aa).

A signal peptide spans 1 to 22; the sequence is MSSISGFLGAIPGAQQILQTMA. 5 disulfide bridges follow: Cys45–Cys63, Cys52–Cys99, Cys62–Cys165, Cys107–Cys157, and Cys229–Cys264. Residue His92 is part of the active site. A glycan (N-linked (GlcNAc...) asparagine) is linked at Asn115. Active-site residues include Glu150 and His154. Positions 274-296 are disordered; sequence KTPNKDPGHGHEPTKTRHPHGPT. Basic and acidic residues predominate over residues 276-288; it reads PNKDPGHGHEPTK. Residue Asn383 is glycosylated (N-linked (GlcNAc...) asparagine).

Belongs to the RNase T2 family.

The protein localises to the vacuole lumen. The protein resides in the cytoplasm. It carries out the reaction a ribonucleotidyl-ribonucleotide-RNA + H2O = a 3'-end 3'-phospho-ribonucleotide-RNA + a 5'-end dephospho-ribonucleoside-RNA + H(+). Rnase which modulates cell survival under stress conditions. Released from the vacuole to the cytoplasm during stress to promote tRNA and rRNA cleavage and to activate separately a downstream pathway that promotes cell death. Involved in cell size, vacuolar morphology and growth at high temperatures and high salt concentration. The sequence is that of Ribonuclease T2-like (rny1) from Emericella nidulans (strain FGSC A4 / ATCC 38163 / CBS 112.46 / NRRL 194 / M139) (Aspergillus nidulans).